The primary structure comprises 427 residues: Histidine--tRNA ligase (427 aa).

This sequence belongs to the class-II aminoacyl-tRNA synthetase family. As to quaternary structure, homodimer.

It localises to the cytoplasm. It carries out the reaction tRNA(His) + L-histidine + ATP = L-histidyl-tRNA(His) + AMP + diphosphate + H(+). The chain is Histidine--tRNA ligase from Streptococcus suis (strain 98HAH33).